The chain runs to 267 residues: tRNA pseudouridine synthase A (267 aa).

Aspartate 53 acts as the Nucleophile in catalysis. Tyrosine 114 contributes to the substrate binding site.

The protein belongs to the tRNA pseudouridine synthase TruA family. As to quaternary structure, homodimer.

It catalyses the reaction uridine(38/39/40) in tRNA = pseudouridine(38/39/40) in tRNA. Its function is as follows. Formation of pseudouridine at positions 38, 39 and 40 in the anticodon stem and loop of transfer RNAs. The chain is tRNA pseudouridine synthase A from Chlamydia trachomatis serovar A (strain ATCC VR-571B / DSM 19440 / HAR-13).